A 60-amino-acid chain; its full sequence is MAKSIQVKLVRSPIGRPEKHRKVLQALGLTRLNKTVNLHATPAVAGAVKKVIHMVEVKEL.

It belongs to the universal ribosomal protein uL30 family. Part of the 50S ribosomal subunit.

In Syntrophobacter fumaroxidans (strain DSM 10017 / MPOB), this protein is Large ribosomal subunit protein uL30.